A 186-amino-acid polypeptide reads, in one-letter code: Dirigent protein 4 (186 aa).

The signal sequence occupies residues Met1–Gly20. N-linked (GlcNAc...) asparagine glycans are attached at residues Asn67, Asn126, Asn169, and Asn180.

The protein belongs to the plant dirigent protein family. In terms of assembly, homodimer.

The protein resides in the secreted. The protein localises to the extracellular space. It localises to the apoplast. Its function is as follows. Dirigent proteins impart stereoselectivity on the phenoxy radical-coupling reaction, yielding optically active lignans from two molecules of coniferyl alcohol in the biosynthesis of lignans, flavonolignans, and alkaloids and thus plays a central role in plant secondary metabolism. In Arabidopsis thaliana (Mouse-ear cress), this protein is Dirigent protein 4 (DIR4).